The following is a 66-amino-acid chain: Gallinacin-8 (66 aa).

Positions M1–L19 are cleaved as a signal peptide. A propeptide spanning residues G20–P25 is cleaved from the precursor. Cystine bridges form between C31–C60, C38–C54, and C43–C61.

Belongs to the beta-defensin family. Expressed in the liver, kidney, gall bladder, testis, ovary and male and femae reproductive tracts. Expressed in the ovarian stroma and the theca and granulosa layers of the ovarian follicle.

The protein localises to the secreted. Its subcellular location is the cytoplasmic granule. In terms of biological role, has bactericidal activity. The chain is Gallinacin-8 (GAL8) from Gallus gallus (Chicken).